Reading from the N-terminus, the 55-residue chain is Large ribosomal subunit protein bL33B (55 aa).

The protein belongs to the bacterial ribosomal protein bL33 family.

This is Large ribosomal subunit protein bL33B (rpmG2) from Mycobacterium tuberculosis (strain CDC 1551 / Oshkosh).